A 458-amino-acid chain; its full sequence is V-type ATP synthase beta chain (458 aa).

This sequence belongs to the ATPase alpha/beta chains family.

Its function is as follows. Produces ATP from ADP in the presence of a proton gradient across the membrane. The V-type beta chain is a regulatory subunit. The protein is V-type ATP synthase beta chain of Fusobacterium nucleatum subsp. nucleatum (strain ATCC 25586 / DSM 15643 / BCRC 10681 / CIP 101130 / JCM 8532 / KCTC 2640 / LMG 13131 / VPI 4355).